Consider the following 317-residue polypeptide: 4-hydroxy-3-methylbut-2-enyl diphosphate reductase (317 aa).

A [4Fe-4S] cluster-binding site is contributed by C12. The (2E)-4-hydroxy-3-methylbut-2-enyl diphosphate site is built by H41 and H74. Dimethylallyl diphosphate is bound by residues H41 and H74. Residues H41 and H74 each coordinate isopentenyl diphosphate. C97 contributes to the [4Fe-4S] cluster binding site. H125 lines the (2E)-4-hydroxy-3-methylbut-2-enyl diphosphate pocket. A dimethylallyl diphosphate-binding site is contributed by H125. H125 is a binding site for isopentenyl diphosphate. E127 (proton donor) is an active-site residue. T168 is a binding site for (2E)-4-hydroxy-3-methylbut-2-enyl diphosphate. Residue C198 coordinates [4Fe-4S] cluster. Positions 226, 227, 228, and 270 each coordinate (2E)-4-hydroxy-3-methylbut-2-enyl diphosphate. Dimethylallyl diphosphate contacts are provided by S226, S227, N228, and S270. Isopentenyl diphosphate contacts are provided by S226, S227, N228, and S270.

The protein belongs to the IspH family. As to quaternary structure, homodimer. Requires [4Fe-4S] cluster as cofactor.

The enzyme catalyses isopentenyl diphosphate + 2 oxidized [2Fe-2S]-[ferredoxin] + H2O = (2E)-4-hydroxy-3-methylbut-2-enyl diphosphate + 2 reduced [2Fe-2S]-[ferredoxin] + 2 H(+). It catalyses the reaction dimethylallyl diphosphate + 2 oxidized [2Fe-2S]-[ferredoxin] + H2O = (2E)-4-hydroxy-3-methylbut-2-enyl diphosphate + 2 reduced [2Fe-2S]-[ferredoxin] + 2 H(+). The protein operates within isoprenoid biosynthesis; dimethylallyl diphosphate biosynthesis; dimethylallyl diphosphate from (2E)-4-hydroxy-3-methylbutenyl diphosphate: step 1/1. It participates in isoprenoid biosynthesis; isopentenyl diphosphate biosynthesis via DXP pathway; isopentenyl diphosphate from 1-deoxy-D-xylulose 5-phosphate: step 6/6. Catalyzes the conversion of 1-hydroxy-2-methyl-2-(E)-butenyl 4-diphosphate (HMBPP) into a mixture of isopentenyl diphosphate (IPP) and dimethylallyl diphosphate (DMAPP). Acts in the terminal step of the DOXP/MEP pathway for isoprenoid precursor biosynthesis. The chain is 4-hydroxy-3-methylbut-2-enyl diphosphate reductase from Yersinia pestis bv. Antiqua (strain Antiqua).